The chain runs to 362 residues: tRNA/tmRNA (uracil-C(5))-methyltransferase (362 aa).

S-adenosyl-L-methionine-binding residues include glutamine 186, tyrosine 214, asparagine 219, glutamate 235, and aspartate 295. The active-site Nucleophile is cysteine 320. The active-site Proton acceptor is glutamate 354.

The protein belongs to the class I-like SAM-binding methyltransferase superfamily. RNA M5U methyltransferase family. TrmA subfamily.

The enzyme catalyses uridine(54) in tRNA + S-adenosyl-L-methionine = 5-methyluridine(54) in tRNA + S-adenosyl-L-homocysteine + H(+). It carries out the reaction uridine(341) in tmRNA + S-adenosyl-L-methionine = 5-methyluridine(341) in tmRNA + S-adenosyl-L-homocysteine + H(+). Dual-specificity methyltransferase that catalyzes the formation of 5-methyluridine at position 54 (m5U54) in all tRNAs, and that of position 341 (m5U341) in tmRNA (transfer-mRNA). This is tRNA/tmRNA (uracil-C(5))-methyltransferase from Stutzerimonas stutzeri (strain A1501) (Pseudomonas stutzeri).